A 414-amino-acid chain; its full sequence is tRNA methyltransferase 10 homolog C (414 aa).

Residues 1-35 constitute a mitochondrion transit peptide; sequence MNVTVRFLRPFARCLVPYTFHRKRSHLYSGVLQRY. Phosphoserine is present on serine 79. Positions 133 to 171 form a coiled coil; the sequence is GKEKAKKAKQVKKEMKAEAREEAKRARLLETTAEEQQQD. The SAM-dependent MTase TRM10-type domain maps to 186 to 378; the sequence is LGWKGVQAMQ…KFVPRRKHTG (193 aa).

The protein belongs to the class IV-like SAM-binding methyltransferase superfamily. TRM10 family. Component of mitochondrial ribonuclease P, a complex composed of TRMT10C/MRPP1, HSD17B10/MRPP2 and PRORP/MRPP3. Interacts with HSD17B10/MRPP2; forming the MRPP1-MRPP2 subcomplex of the mitochondrial ribonuclease P complex. Interacts with GRSF1.

It localises to the mitochondrion matrix. The protein resides in the mitochondrion nucleoid. The catalysed reaction is adenosine(9) in tRNA + S-adenosyl-L-methionine = N(1)-methyladenosine(9) in tRNA + S-adenosyl-L-homocysteine + H(+). It carries out the reaction guanosine(9) in tRNA + S-adenosyl-L-methionine = N(1)-methylguanosine(9) in tRNA + S-adenosyl-L-homocysteine + H(+). It catalyses the reaction an adenosine in mRNA + S-adenosyl-L-methionine = an N(1)-methyladenosine in mRNA + S-adenosyl-L-homocysteine + H(+). Mitochondrial tRNA N(1)-methyltransferase involved in mitochondrial tRNA maturation. Component of mitochondrial ribonuclease P, a complex composed of TRMT10C/MRPP1, HSD17B10/MRPP2 and PRORP/MRPP3, which cleaves tRNA molecules in their 5'-ends. Together with HSD17B10/MRPP2, forms a subcomplex of the mitochondrial ribonuclease P, named MRPP1-MRPP2 subcomplex, which displays functions that are independent of the ribonuclease P activity. The MRPP1-MRPP2 subcomplex catalyzes the formation of N(1)-methylguanine and N(1)-methyladenine at position 9 (m1G9 and m1A9, respectively) in tRNAs; TRMT10C/MRPP1 acting as the catalytic N(1)-methyltransferase subunit. The MRPP1-MRPP2 subcomplex also acts as a tRNA maturation platform: following 5'-end cleavage by the mitochondrial ribonuclease P complex, the MRPP1-MRPP2 subcomplex enhances the efficiency of 3'-processing catalyzed by ELAC2, retains the tRNA product after ELAC2 processing and presents the nascent tRNA to the mitochondrial CCA tRNA nucleotidyltransferase TRNT1 enzyme. In addition to tRNA N(1)-methyltransferase activity, TRMT10C/MRPP1 also acts as a mRNA N(1)-methyltransferase by mediating methylation of adenosine residues at the N(1) position of MT-ND5 mRNA. Associates with mitochondrial DNA complexes at the nucleoids to initiate RNA processing and ribosome assembly. This Mus musculus (Mouse) protein is tRNA methyltransferase 10 homolog C.